The sequence spans 403 residues: Glutamyl-tRNA reductase 2 (403 aa).

Residues 47–50 (TCHR), Ser-98, 103–105 (ETD), and Gln-109 each bind substrate. The Nucleophile role is filled by Cys-48. 177-182 (GAGAVG) contacts NADP(+).

It belongs to the glutamyl-tRNA reductase family. Homodimer.

It carries out the reaction (S)-4-amino-5-oxopentanoate + tRNA(Glu) + NADP(+) = L-glutamyl-tRNA(Glu) + NADPH + H(+). It participates in porphyrin-containing compound metabolism; protoporphyrin-IX biosynthesis; 5-aminolevulinate from L-glutamyl-tRNA(Glu): step 1/2. Catalyzes the NADPH-dependent reduction of glutamyl-tRNA(Glu) to glutamate 1-semialdehyde (GSA). The protein is Glutamyl-tRNA reductase 2 of Pyrobaculum arsenaticum (strain DSM 13514 / JCM 11321 / PZ6).